A 507-amino-acid polypeptide reads, in one-letter code: Alpha-amylase 2 (507 aa).

Residues 1-20 form the signal peptide; that stretch reads MKFATILSTTALALSSLVAS. Cysteine 62 and cysteine 70 are disulfide-bonded. Tryptophan 115 contacts substrate. Asparagine 153 is a binding site for Ca(2+). Histidine 154 contacts substrate. Cysteines 182 and 196 form a disulfide. Ca(2+)-binding residues include glutamate 194 and aspartate 207. Asparagine 229 carries an N-linked (GlcNAc...) asparagine glycan. Arginine 236 contacts substrate. Ca(2+) is bound by residues aspartate 238, histidine 242, and glutamate 262. The Nucleophile role is filled by aspartate 238. A substrate-binding site is contributed by 241–242; sequence KH. Glutamate 262 functions as the Proton donor in the catalytic mechanism. Glycine 266 is a substrate binding site. Cysteines 272 and 315 form a disulfide. Residues aspartate 329 and arginine 376 each coordinate substrate. A disulfide bridge connects residues cysteine 470 and cysteine 505.

This sequence belongs to the glycosyl hydrolase 13 family. Ca(2+) is required as a cofactor.

It catalyses the reaction Endohydrolysis of (1-&gt;4)-alpha-D-glucosidic linkages in polysaccharides containing three or more (1-&gt;4)-alpha-linked D-glucose units.. In Schwanniomyces occidentalis (Yeast), this protein is Alpha-amylase 2 (SWA2).